Reading from the N-terminus, the 356-residue chain is S-adenosylmethionine:tRNA ribosyltransferase-isomerase (356 aa).

The protein belongs to the QueA family. In terms of assembly, monomer.

It localises to the cytoplasm. The catalysed reaction is 7-aminomethyl-7-carbaguanosine(34) in tRNA + S-adenosyl-L-methionine = epoxyqueuosine(34) in tRNA + adenine + L-methionine + 2 H(+). Its pathway is tRNA modification; tRNA-queuosine biosynthesis. Functionally, transfers and isomerizes the ribose moiety from AdoMet to the 7-aminomethyl group of 7-deazaguanine (preQ1-tRNA) to give epoxyqueuosine (oQ-tRNA). This chain is S-adenosylmethionine:tRNA ribosyltransferase-isomerase, found in Xanthomonas campestris pv. campestris (strain B100).